The primary structure comprises 200 residues: dTTP/UTP pyrophosphatase (200 aa).

The active-site Proton acceptor is the aspartate 80.

This sequence belongs to the Maf family. YhdE subfamily. A divalent metal cation is required as a cofactor.

The protein resides in the cytoplasm. The catalysed reaction is dTTP + H2O = dTMP + diphosphate + H(+). The enzyme catalyses UTP + H2O = UMP + diphosphate + H(+). Its function is as follows. Nucleoside triphosphate pyrophosphatase that hydrolyzes dTTP and UTP. May have a dual role in cell division arrest and in preventing the incorporation of modified nucleotides into cellular nucleic acids. The sequence is that of dTTP/UTP pyrophosphatase from Pasteurella multocida (strain Pm70).